A 308-amino-acid polypeptide reads, in one-letter code: uncharacterized protein (308 aa).

This is an uncharacterized protein from Escherichia coli (Bacteriophage T4).